The sequence spans 518 residues: Endoglucanase 18 (518 aa).

The Cytoplasmic portion of the chain corresponds to Met1–Gly35. A helical transmembrane segment spans residues Val36 to Val56. At Ala57–Ser518 the chain is on the extracellular side. The N-linked (GlcNAc...) asparagine glycan is linked to Asn71. Asp101 serves as the catalytic Nucleophile. N-linked (GlcNAc...) asparagine glycans are attached at residues Asn214, Asn251, and Asn272. The active site involves His436. Asn477 is a glycosylation site (N-linked (GlcNAc...) asparagine). Residues Asp482 and Glu491 contribute to the active site.

Belongs to the glycosyl hydrolase 9 (cellulase E) family.

Its subcellular location is the membrane. It carries out the reaction Endohydrolysis of (1-&gt;4)-beta-D-glucosidic linkages in cellulose, lichenin and cereal beta-D-glucans.. In Oryza sativa subsp. japonica (Rice), this protein is Endoglucanase 18.